We begin with the raw amino-acid sequence, 329 residues long: Phosphate import ATP-binding protein PstB (329 aa).

Residues phenylalanine 83–isoleucine 325 form the ABC transporter domain. Glycine 116–serine 123 contributes to the ATP binding site.

Belongs to the ABC transporter superfamily. Phosphate importer (TC 3.A.1.7) family. In terms of assembly, the complex is composed of two ATP-binding proteins (PstB), two transmembrane proteins (PstC and PstA) and a solute-binding protein (PstS).

It localises to the cell membrane. The enzyme catalyses phosphate(out) + ATP + H2O = ADP + 2 phosphate(in) + H(+). Its function is as follows. Part of the ABC transporter complex PstSACB involved in phosphate import. Responsible for energy coupling to the transport system. This Mycoplasma genitalium (strain ATCC 33530 / DSM 19775 / NCTC 10195 / G37) (Mycoplasmoides genitalium) protein is Phosphate import ATP-binding protein PstB.